Here is a 170-residue protein sequence, read N- to C-terminus: Adenine phosphoribosyltransferase (170 aa).

This sequence belongs to the purine/pyrimidine phosphoribosyltransferase family. Homodimer.

The protein resides in the cytoplasm. It carries out the reaction AMP + diphosphate = 5-phospho-alpha-D-ribose 1-diphosphate + adenine. It participates in purine metabolism; AMP biosynthesis via salvage pathway; AMP from adenine: step 1/1. Catalyzes a salvage reaction resulting in the formation of AMP, that is energically less costly than de novo synthesis. This is Adenine phosphoribosyltransferase from Brachyspira hyodysenteriae (strain ATCC 49526 / WA1).